A 349-amino-acid chain; its full sequence is MSLNTDLTIALDVMGGDQGPLITISSAITAISHQPNLHLILCGDEIIITETLAHFEITKENLATHKQLSIFPTSQVVLMSDKPIVALRTKKDSSMRKALDLVHEGRAQACVSAGNTGALFSMAHFVLKNIPGVERPALISSLPTHDKDKHVFMLDLGANVFCDSHVLYQFGVMGSVMAEQVDGINKPRVALLNMGEEAIKGSDHIKLAALELTENKDINYVGFIEGSDIFSNKADVIVCDGFVGNVALKTCEGVARLVYEKSKTAFSASLVAKLFGSLLKPSFKKLFKTMNPDQYNGASLIGLRGIVVKSHGNANSSAFLSAIEEAVKEVERQVPEKIKTSLEHGFTCR.

It belongs to the PlsX family. Homodimer. Probably interacts with PlsY.

It localises to the cytoplasm. It carries out the reaction a fatty acyl-[ACP] + phosphate = an acyl phosphate + holo-[ACP]. Its pathway is lipid metabolism; phospholipid metabolism. Its function is as follows. Catalyzes the reversible formation of acyl-phosphate (acyl-PO(4)) from acyl-[acyl-carrier-protein] (acyl-ACP). This enzyme utilizes acyl-ACP as fatty acyl donor, but not acyl-CoA. This Colwellia psychrerythraea (strain 34H / ATCC BAA-681) (Vibrio psychroerythus) protein is Phosphate acyltransferase.